A 230-amino-acid chain; its full sequence is Large ribosomal subunit protein uL1 (230 aa).

It belongs to the universal ribosomal protein uL1 family. Part of the 50S ribosomal subunit.

Its function is as follows. Binds directly to 23S rRNA. The L1 stalk is quite mobile in the ribosome, and is involved in E site tRNA release. Protein L1 is also a translational repressor protein, it controls the translation of the L11 operon by binding to its mRNA. The protein is Large ribosomal subunit protein uL1 of Paramagnetospirillum magneticum (strain ATCC 700264 / AMB-1) (Magnetospirillum magneticum).